The following is a 276-amino-acid chain: NAC domain-containing protein 67 (276 aa).

The NAC domain maps to 17 to 170; sequence LPPGFRFHPT…DWVLCRLYNK (154 aa).

As to expression, expressed in leaf blades.

It localises to the nucleus. Functionally, probable transcription factor involved in stress response. The polypeptide is NAC domain-containing protein 67 (Oryza sativa subsp. japonica (Rice)).